Consider the following 219-residue polypeptide: Cytochrome b6 (219 aa).

Residues 32–52 form a helical membrane-spanning segment; sequence IFYCFGGIVLTCFIIQAATGF. Cys-35 lines the heme c pocket. Heme b-binding residues include His-86 and His-100. 3 helical membrane-spanning segments follow: residues 90–110, 116–136, and 190–210; these read SGLM…TAGF, LTWI…VTGY, and AHTF…FLMI. 2 residues coordinate heme b: His-191 and His-206.

Belongs to the cytochrome b family. PetB subfamily. The 4 large subunits of the cytochrome b6-f complex are cytochrome b6, subunit IV (17 kDa polypeptide, PetD), cytochrome f and the Rieske protein, while the 4 small subunits are PetG, PetL, PetM and PetN. The complex functions as a dimer. Heme b is required as a cofactor. It depends on heme c as a cofactor.

It is found in the plastid. It localises to the chloroplast thylakoid membrane. Functionally, component of the cytochrome b6-f complex, which mediates electron transfer between photosystem II (PSII) and photosystem I (PSI), cyclic electron flow around PSI, and state transitions. The chain is Cytochrome b6 from Amphidinium operculatum (Dinoflagellate).